Consider the following 214-residue polypeptide: Uridine kinase (214 aa).

Residue Gly-11–Thr-18 coordinates ATP.

This sequence belongs to the uridine kinase family.

Its subcellular location is the cytoplasm. It catalyses the reaction uridine + ATP = UMP + ADP + H(+). It carries out the reaction cytidine + ATP = CMP + ADP + H(+). It participates in pyrimidine metabolism; CTP biosynthesis via salvage pathway; CTP from cytidine: step 1/3. Its pathway is pyrimidine metabolism; UMP biosynthesis via salvage pathway; UMP from uridine: step 1/1. The protein is Uridine kinase of Brevibacillus brevis (strain 47 / JCM 6285 / NBRC 100599).